The following is a 277-amino-acid chain: UBX domain-containing protein 10 (277 aa).

A disordered region spans residues 1–102; that stretch reads MAIEAPVNFA…APDEMPELLL (102 aa). Residues 16–31 show a composition bias toward polar residues; that stretch reads TVVSTAGDSSTWQPSS. The segment covering 35-50 has biased composition (basic residues); it reads HVIRPKSAKGRKRPNL. Positions 60-77 are enriched in low complexity; it reads SPSALSSSPPPRSSGSPS. At S88 the chain carries Phosphoserine. In terms of domain architecture, UBX spans 191–268; it reads DEEPRLLLAV…GILHKSVLGI (78 aa).

Belongs to the UBXN10 family. Interacts with CLUAP1; the interaction is direct and mediates interaction with the intraflagellar transport complex B (IFT-B). Interacts with VCP; the interaction is direct.

The protein localises to the cell projection. The protein resides in the cilium. Its function is as follows. VCP/p97-binding protein required for ciliogenesis. Acts as a tethering factor that facilitates recruitment of VCP/p97 to the intraflagellar transport complex B (IFT-B) in cilia. UBX domain-containing proteins act as tethering factors for VCP/p97 and may specify substrate specificity of VCP/p97. The protein is UBX domain-containing protein 10 of Mus musculus (Mouse).